Reading from the N-terminus, the 138-residue chain is U1 small nuclear ribonucleoprotein C (138 aa).

The Matrin-type zinc finger occupies 4 to 36 (FYCDYCDTYLTHDSPSVRKTHCSGRKHKENVRD). Tyr-8 is subject to Phosphotyrosine. A Phosphoserine modification is found at Ser-17. Lys-52 bears the N6-acetyllysine mark. The interval 62-99 (IPPNLFSAPPLGGPMIPPPHPSMMGPPPPGMMPVGPPP) is disordered. A compositionally biased stretch (pro residues) spans 72–99 (LGGPMIPPPHPSMMGPPPPGMMPVGPPP).

This sequence belongs to the U1 small nuclear ribonucleoprotein C family. In terms of assembly, component of the U1 snRNP. The U1 snRNP is composed of the U1 snRNA and the 7 core Sm proteins SNRPB, SNRPD1, SNRPD2, SNRPD3, SNRPE, SNRPF and SNRPG that assemble in a heptameric protein ring on the Sm site of the small nuclear RNA to form the core snRNP, and at least 3 U1 snRNP-specific proteins SNRNP70/U1-70K, SNRPA/U1-A and SNRPC/U1-C. SNRPC/U1-C interacts with U1 snRNA and the 5' splice-site region of the pre-mRNA. Interacts (via N-terminus) with TIA1 (via C-terminus); thereby promoting spliceosomal U1 snRNP recruitment to 5' splice sites.

It localises to the nucleus. Its function is as follows. Component of the spliceosomal U1 snRNP, which is essential for recognition of the pre-mRNA 5' splice-site and the subsequent assembly of the spliceosome. SNRPC/U1-C is directly involved in initial 5' splice-site recognition for both constitutive and regulated alternative splicing. The interaction with the 5' splice-site seems to precede base-pairing between the pre-mRNA and the U1 snRNA. Stimulates commitment or early (E) complex formation by stabilizing the base pairing of the 5' end of the U1 snRNA and the 5' splice-site region. This chain is U1 small nuclear ribonucleoprotein C, found in Monodelphis domestica (Gray short-tailed opossum).